The chain runs to 349 residues: Farnesyl pyrophosphate synthase vrtD (349 aa).

Isopentenyl diphosphate-binding residues include K53, R56, and Q92. Residues D99 and D103 each contribute to the Mg(2+) site. A dimethylallyl diphosphate-binding site is contributed by R108. R109 is a binding site for isopentenyl diphosphate. K196, T197, Q236, K253, and K262 together coordinate dimethylallyl diphosphate.

The protein belongs to the FPP/GGPP synthase family. Mg(2+) serves as cofactor.

It catalyses the reaction isopentenyl diphosphate + dimethylallyl diphosphate = (2E)-geranyl diphosphate + diphosphate. The enzyme catalyses isopentenyl diphosphate + (2E)-geranyl diphosphate = (2E,6E)-farnesyl diphosphate + diphosphate. It functions in the pathway secondary metabolite biosynthesis; terpenoid biosynthesis. Its function is as follows. Farnesyl pyrophosphate synthase; part of the gene cluster that mediates the biosynthesis of viridicatumtoxin, a tetracycline-like fungal meroterpenoid with a unique, fused spirobicyclic ring system. The first step of the pathway is the production of the malonamoyl-CoA starter unit for the polyketide synthase vrtA. The aldolase vrtJ may be involved in the synthesis of the malonamate substrate for malonamoyl-CoA synthetase vrtB. The polyketide synthase vrtA then may utilize the malonamoyl-CoA starter unit, followed by sequential condensation of eight malonyl-CoA units to form the polyketide backbone. The cyclization of the last ring could be mediated by the lactamase-like protein vrtG. The proposed post-PKS tailoring steps are a hydroxylation at C5 catalyzed the cytochrome P450 monooxygenase vrtE, a hydroxylation at C12a catalyzed by VrtH and/or VrtI, and an O-methylation by the O-methyltransferase vrtF. VrtC is then proposed to catalyze the transfer of a geranyl group synthesized by vrtD to the aromatic C ring of the tetracyclic polyketide intermediate of viridicatumtoxin to yield previridicatumtoxin. Finally, the cytochrome P450 monooxygenase vrtK catalyzes the spirocyclization of the geranyl moiety of previridicatumtoxin to afford viridicatumtoxin. The chain is Farnesyl pyrophosphate synthase vrtD from Penicillium aethiopicum.